Reading from the N-terminus, the 557-residue chain is DNA mismatch repair protein MutL (557 aa).

Belongs to the DNA mismatch repair MutL/HexB family.

Functionally, this protein is involved in the repair of mismatches in DNA. It is required for dam-dependent methyl-directed DNA mismatch repair. May act as a 'molecular matchmaker', a protein that promotes the formation of a stable complex between two or more DNA-binding proteins in an ATP-dependent manner without itself being part of a final effector complex. The polypeptide is DNA mismatch repair protein MutL (Methanothrix thermoacetophila (strain DSM 6194 / JCM 14653 / NBRC 101360 / PT) (Methanosaeta thermophila)).